Here is a 460-residue protein sequence, read N- to C-terminus: Sexual development regulator velC (460 aa).

3 disordered regions span residues 67-131 (VGPD…PQAP), 152-216 (YAPR…RPDP), and 422-460 (KKGN…SARQ). Positions 192 to 207 (PVTTNGRPPDSNSPMV) are enriched in polar residues. The Velvet domain occupies 239–422 (LSDNRFNLQI…KEQGCIISIK (184 aa)). Basic and acidic residues predominate over residues 423–437 (KGNDRSKNTRSHDDS). The span at 451-460 (GKRRRRSARQ) shows a compositional bias: basic residues.

Belongs to the velvet family. VelC subfamily. Interacts with VE1.

The protein resides in the nucleus. Velvet-domain-containing protein that acts as a positive regulator of sexual development. Dispensable for regulation of conidial size, hyphal hydrophobicity, fumonisin production, and oxidant resistance. In Gibberella moniliformis (strain M3125 / FGSC 7600) (Maize ear and stalk rot fungus), this protein is Sexual development regulator velC.